Reading from the N-terminus, the 299-residue chain is Coenzyme PQQ synthesis protein B (299 aa).

This sequence belongs to the PqqB family.

The protein operates within cofactor biosynthesis; pyrroloquinoline quinone biosynthesis. May be involved in the transport of PQQ or its precursor to the periplasm. The polypeptide is Coenzyme PQQ synthesis protein B (Methylorubrum extorquens (strain ATCC 14718 / DSM 1338 / JCM 2805 / NCIMB 9133 / AM1) (Methylobacterium extorquens)).